The chain runs to 157 residues: uncharacterized protein (157 aa).

The region spanning 9 to 146 is the N-acetyltransferase domain; it reads LLINYKTLDE…GDFYVWHPET (138 aa).

This is an uncharacterized protein from Bacillus cereus (strain ATCC 10987 / NRS 248).